A 193-amino-acid chain; its full sequence is Tellurium resistance protein TerZ (193 aa).

This sequence belongs to the CAPAB/TerDEXZ family.

In terms of biological role, not known; seems to contribute to the tellurium resistance (Ter) mechanism. Also involved in phage inhibition (Phi) and colicin resistance (PacB). This is Tellurium resistance protein TerZ (terZ) from Serratia marcescens.